The sequence spans 778 residues: Phenylalanine--tRNA ligase beta subunit (778 aa).

The region spanning 39-150 is the tRNA-binding domain; it reads YEVPQKIVFG…GKYKIGEEVS (112 aa). The B5 domain maps to 391–467; it reads HEDKIISLNK…RLVGIDNIPS (77 aa). Asp445, Asp451, Glu454, and Glu455 together coordinate Mg(2+). One can recognise an FDX-ACB domain in the interval 686-778; sequence SKYQASFRDL…LKNQLGVGIR (93 aa).

This sequence belongs to the phenylalanyl-tRNA synthetase beta subunit family. Type 1 subfamily. As to quaternary structure, tetramer of two alpha and two beta subunits. It depends on Mg(2+) as a cofactor.

It is found in the cytoplasm. It catalyses the reaction tRNA(Phe) + L-phenylalanine + ATP = L-phenylalanyl-tRNA(Phe) + AMP + diphosphate + H(+). The sequence is that of Phenylalanine--tRNA ligase beta subunit from Sulfurimonas denitrificans (strain ATCC 33889 / DSM 1251) (Thiomicrospira denitrificans (strain ATCC 33889 / DSM 1251)).